We begin with the raw amino-acid sequence, 293 residues long: Ankyrin repeat and SOCS box protein 11 (293 aa).

ANK repeat units follow at residues 36-65 (DDRT…NVGM), 69-98 (DGIT…DANA), 102-131 (DGAT…AHHP), 134-163 (LLCS…NVDM), 167-196 (SVGT…DVQC), 199-228 (GLDT…DRTS), and 232-259 (EGKT…SLSQ). Positions 244 to 293 (SIKHLLQTAGTCSLSQLCRWCIRRSLGQKGLNKTKTLCLPHMLHNYLLYH) constitute an SOCS box domain.

It belongs to the ankyrin SOCS box (ASB) family. As to quaternary structure, substrate-recognition component of the ECS(ASB11) complex, composed of asb11, cul5, elob, eloc and rnf7/rbx2. Expressed in the developing nervous system: localizes to neural plate margins and is abutting the proneuronal zone.

Its subcellular location is the endoplasmic reticulum. The protein operates within protein modification; protein ubiquitination. Functionally, substrate-recognition component of a cullin-5-RING E3 ubiquitin-protein ligase complex (ECS complex, also named CRL5 complex), which mediates the ubiquitination and subsequent proteasomal degradation of target proteins. Acts as a regulator of the neuronal progenitor compartment size by maintaining the neural precursors in the proliferating undifferentiated state. The ECS(ASB11) complex acts as a positive regulator of Notch signaling pathway by mediating ubiquitination and degradation of DeltaA (dla). Also acts as a regulator of regenerative myogenesis. This is Ankyrin repeat and SOCS box protein 11 from Danio rerio (Zebrafish).